The chain runs to 200 residues: GTP-binding protein rho5 (200 aa).

13–20 (GDGACGKT) serves as a coordination point for GTP. Residues 35 to 43 (YVPTVFENY) carry the Effector region motif. GTP contacts are provided by residues 60–64 (DTAGQ) and 118–121 (CKVD). Cys-197 is modified (cysteine methyl ester). Residue Cys-197 is the site of S-geranylgeranyl cysteine attachment. A propeptide spans 198-200 (ILL) (removed in mature form).

Belongs to the small GTPase superfamily. Rho family.

The protein resides in the cell membrane. The sequence is that of GTP-binding protein rho5 (rho5) from Schizosaccharomyces pombe (strain 972 / ATCC 24843) (Fission yeast).